We begin with the raw amino-acid sequence, 436 residues long: C4-dicarboxylate transport protein 2 (436 aa).

A run of 9 helical transmembrane segments spans residues 14-34 (VLVA…TAVA), 45-65 (LIKM…IAGM), 77-97 (MALL…LVVV), 142-162 (VVGA…VLFG), 198-218 (PIGA…GSLV), 223-243 (LMLC…GGIA), 290-310 (VVGL…SIYL), 331-351 (ITLL…TGSG), and 353-373 (IVLA…LALI). Residues 414-436 (ELAGEGNASSPASDIPVGGREAV) are disordered.

This sequence belongs to the dicarboxylate/amino acid:cation symporter (DAACS) (TC 2.A.23) family.

The protein localises to the cell inner membrane. Functionally, responsible for the transport of dicarboxylates such as succinate, fumarate, and malate from the periplasm across the membrane. In Pseudomonas aeruginosa (strain UCBPP-PA14), this protein is C4-dicarboxylate transport protein 2.